The chain runs to 1726 residues: Protein Shroom2 (1726 aa).

The PDZ domain maps to 79–159; that stretch reads AGGCYSYWRG…ILKMIVKRRN (81 aa). 4 disordered regions span residues 294 to 373, 425 to 451, 657 to 676, and 697 to 785; these read DNTK…RSDS, RTVA…LSPY, FSQL…DYSW, and EGRN…STYR. Positions 318–328 are enriched in polar residues; sequence VLQSTSINETS. Residues 329–338 show a composition bias toward basic and acidic residues; that stretch reads KIQRTEDNTE. The segment covering 657–667 has biased composition (basic and acidic residues); the sequence is FSQLDHSEKGS. 2 stretches are compositionally biased toward polar residues: residues 746–755 and 769–785; these read SKSTAALTES and LESM…STYR. Residues 788 to 877 form the ASD1 domain; the sequence is LQEAQARVLR…SEPEKINEVG (90 aa). Disordered regions lie at residues 913–968, 1007–1080, 1092–1120, 1166–1240, 1269–1299, and 1471–1499; these read PKVP…DKVT, LDAD…QCGA, KWKP…GTLP, FKKR…KNPS, SSKS…DKPP, and AQQR…VPSA. Over residues 917 to 926 the composition is skewed to low complexity; it reads PKVVSSSQSE. The segment covering 936-948 has biased composition (basic and acidic residues); that stretch reads DYAKSSEGQESKR. 2 stretches are compositionally biased toward polar residues: residues 1054–1070 and 1104–1119; these read NSNS…SPTR and ETSN…SGTL. The span at 1191 to 1205 shows a compositional bias: low complexity; sequence SSSSLATSSESLLTA. Positions 1209–1235 are enriched in polar residues; sequence RAQSYSPSSQDTFPPQSLQKQSPSTYP. The 295-residue stretch at 1427-1721 folds into the ASD2 domain; it reads EELVREIVDK…QLKCLTDSLP (295 aa).

This sequence belongs to the shroom family. Interacts with F-actin.

The protein localises to the apical cell membrane. It localises to the cell junction. Its subcellular location is the tight junction. The protein resides in the cytoplasm. It is found in the cytoskeleton. In terms of biological role, may be involved in endothelial cell morphology changes during cell spreading. Required for eye pigmentation. In the retinal pigment epithelium, regulates the biogenesis of melanosomes and promotes their association with the apical cell surface by inducing gamma-tubulin redistribution. In Xenopus tropicalis (Western clawed frog), this protein is Protein Shroom2 (shroom2).